A 357-amino-acid chain; its full sequence is Peptide chain release factor 1 (357 aa).

Residue Gln232 is modified to N5-methylglutamine. Residues 284-304 (AERAAERKGQIGSGDRSERIR) show a composition bias toward basic and acidic residues. The disordered stretch occupies residues 284–308 (AERAAERKGQIGSGDRSERIRTYNY).

It belongs to the prokaryotic/mitochondrial release factor family. Post-translationally, methylated by PrmC. Methylation increases the termination efficiency of RF1.

The protein localises to the cytoplasm. Its function is as follows. Peptide chain release factor 1 directs the termination of translation in response to the peptide chain termination codons UAG and UAA. The sequence is that of Peptide chain release factor 1 from Maricaulis maris (strain MCS10) (Caulobacter maris).